The sequence spans 211 residues: Small ribosomal subunit protein uS3 (211 aa).

The KH type-2 domain occupies 38–106 (LRNFLKKRLY…EIYLNIQEVR (69 aa)).

Belongs to the universal ribosomal protein uS3 family. As to quaternary structure, part of the 30S ribosomal subunit. Forms a tight complex with proteins S10 and S14.

In terms of biological role, binds the lower part of the 30S subunit head. Binds mRNA in the 70S ribosome, positioning it for translation. The polypeptide is Small ribosomal subunit protein uS3 (Geobacter sulfurreducens (strain ATCC 51573 / DSM 12127 / PCA)).